The sequence spans 347 residues: DNA-directed RNA polymerase subunit alpha (347 aa).

An alpha N-terminal domain (alpha-NTD) region spans residues 1–243 (MLIKQGDRLI…DQISVFINFD (243 aa)). The alpha C-terminal domain (alpha-CTD) stretch occupies residues 260–347 (VNENLFKGID…EWKRKQQNEA (88 aa)).

The protein belongs to the RNA polymerase alpha chain family. In terms of assembly, homodimer. The RNAP catalytic core consists of 2 alpha, 1 beta, 1 beta' and 1 omega subunit. When a sigma factor is associated with the core the holoenzyme is formed, which can initiate transcription.

It carries out the reaction RNA(n) + a ribonucleoside 5'-triphosphate = RNA(n+1) + diphosphate. In terms of biological role, DNA-dependent RNA polymerase catalyzes the transcription of DNA into RNA using the four ribonucleoside triphosphates as substrates. This is DNA-directed RNA polymerase subunit alpha from Nitratidesulfovibrio vulgaris (strain DSM 19637 / Miyazaki F) (Desulfovibrio vulgaris).